The chain runs to 195 residues: Thymidylate kinase (195 aa).

7 to 14 (GIDGVGKS) contributes to the ATP binding site.

It belongs to the thymidylate kinase family.

It carries out the reaction dTMP + ATP = dTDP + ADP. In terms of biological role, phosphorylation of dTMP to form dTDP in both de novo and salvage pathways of dTTP synthesis. The sequence is that of Thymidylate kinase from Campylobacter hominis (strain ATCC BAA-381 / DSM 21671 / CCUG 45161 / LMG 19568 / NCTC 13146 / CH001A).